The following is a 361-amino-acid chain: Phospho-N-acetylmuramoyl-pentapeptide-transferase (361 aa).

Helical transmembrane passes span 28–48 (LAVLVTLSLSFLIGPRLIKFL), 74–94 (TMGGIMIILSSCFSTLLLADL), 99–119 (IWITLFGFVSFSIIGFLDDYA), 135–155 (LLLQGIISLIVCILLEYTIDS), 167–187 (SLSMDLGYLYIFFAIFVIVGA), 203–223 (VPIALTAGSFALISYLVGNLI), 236–256 (TGELTIFCASIVGSCLGFLWF), 263–283 (VFMGDTGSLSLGGVLGIISVI), 288–308 (IVLGIVGGLFVIETISVIMQV), and 338–358 (KVVIRFWIISLIFVLIGLSSL).

It belongs to the glycosyltransferase 4 family. MraY subfamily. It depends on Mg(2+) as a cofactor.

It localises to the cell inner membrane. It catalyses the reaction UDP-N-acetyl-alpha-D-muramoyl-L-alanyl-gamma-D-glutamyl-meso-2,6-diaminopimeloyl-D-alanyl-D-alanine + di-trans,octa-cis-undecaprenyl phosphate = di-trans,octa-cis-undecaprenyl diphospho-N-acetyl-alpha-D-muramoyl-L-alanyl-D-glutamyl-meso-2,6-diaminopimeloyl-D-alanyl-D-alanine + UMP. It participates in cell wall biogenesis; peptidoglycan biosynthesis. Functionally, catalyzes the initial step of the lipid cycle reactions in the biosynthesis of the cell wall peptidoglycan: transfers peptidoglycan precursor phospho-MurNAc-pentapeptide from UDP-MurNAc-pentapeptide onto the lipid carrier undecaprenyl phosphate, yielding undecaprenyl-pyrophosphoryl-MurNAc-pentapeptide, known as lipid I. The sequence is that of Phospho-N-acetylmuramoyl-pentapeptide-transferase from Rickettsia bellii (strain OSU 85-389).